The chain runs to 446 residues: Chromosomal replication initiator protein DnaA (446 aa).

The tract at residues 1–81 (MENISDLWNS…AKLAIRFIIP (81 aa)) is domain I, interacts with DnaA modulators. The segment at 81–109 (PQSQAEEDIDLPPVKRNPAQDDSAHLPQS) is domain II. The interval 110–326 (MLNPKYTFDT…GALIRVVAYS (217 aa)) is domain III, AAA+ region. The ATP site is built by G154, G156, K157, and T158. The domain IV, binds dsDNA stretch occupies residues 327 to 446 (SLINKDINAD…QVEEINGILK (120 aa)).

The protein belongs to the DnaA family. Oligomerizes as a right-handed, spiral filament on DNA at oriC.

It is found in the cytoplasm. In terms of biological role, plays an essential role in the initiation and regulation of chromosomal replication. ATP-DnaA binds to the origin of replication (oriC) to initiate formation of the DNA replication initiation complex once per cell cycle. Binds the DnaA box (a 9 base pair repeat at the origin) and separates the double-stranded (ds)DNA. Forms a right-handed helical filament on oriC DNA; dsDNA binds to the exterior of the filament while single-stranded (ss)DNA is stabiized in the filament's interior. The ATP-DnaA-oriC complex binds and stabilizes one strand of the AT-rich DNA unwinding element (DUE), permitting loading of DNA polymerase. After initiation quickly degrades to an ADP-DnaA complex that is not apt for DNA replication. Binds acidic phospholipids. The protein is Chromosomal replication initiator protein DnaA of Bacillus cereus (strain G9842).